A 313-amino-acid polypeptide reads, in one-letter code: HPr kinase/phosphorylase (313 aa).

Catalysis depends on residues H140 and K161. Residue 155 to 162 (GDSGVGKS) coordinates ATP. S162 lines the Mg(2+) pocket. Catalysis depends on D179, which acts as the Proton acceptor; for phosphorylation activity. Proton donor; for dephosphorylation activity. The segment at 203–212 (LEIRGIGIID) is important for the catalytic mechanism of both phosphorylation and dephosphorylation. E204 is a Mg(2+) binding site. R245 is a catalytic residue. The interval 266-271 (PVKVGR) is important for the catalytic mechanism of dephosphorylation.

Belongs to the HPrK/P family. Homohexamer. It depends on Mg(2+) as a cofactor.

It carries out the reaction [HPr protein]-L-serine + ATP = [HPr protein]-O-phospho-L-serine + ADP + H(+). The enzyme catalyses [HPr protein]-O-phospho-L-serine + phosphate + H(+) = [HPr protein]-L-serine + diphosphate. Catalyzes the ATP- as well as the pyrophosphate-dependent phosphorylation of a specific serine residue in HPr, a phosphocarrier protein of the phosphoenolpyruvate-dependent sugar phosphotransferase system (PTS). HprK/P also catalyzes the pyrophosphate-producing, inorganic phosphate-dependent dephosphorylation (phosphorolysis) of seryl-phosphorylated HPr (P-Ser-HPr). The two antagonistic activities of HprK/P are regulated by several intracellular metabolites, which change their concentration in response to the absence or presence of rapidly metabolisable carbon sources (glucose, fructose, etc.) in the growth medium. Therefore, by controlling the phosphorylation state of HPr, HPrK/P is a sensor enzyme that plays a major role in the regulation of carbon metabolism and sugar transport: it mediates carbon catabolite repression (CCR), and regulates PTS-catalyzed carbohydrate uptake and inducer exclusion. This is HPr kinase/phosphorylase from Latilactobacillus sakei subsp. sakei (strain 23K) (Lactobacillus sakei subsp. sakei).